The sequence spans 403 residues: L-alanine/L-glutamate racemase (403 aa).

Residues tyrosine 62–asparagine 64, glycine 92–leucine 93, and alanine 209–threonine 211 contribute to the pyridoxal 5'-phosphate site. Lysine 212 carries the N6-(pyridoxal phosphate)lysine modification.

The protein belongs to the trans-sulfuration enzymes family. Homotetramer; dimer of active dimers. Pyridoxal 5'-phosphate is required as a cofactor.

The enzyme catalyses L-alanine = D-alanine. It catalyses the reaction L-glutamate = D-glutamate. It carries out the reaction L,L-cystathionine + H2O = L-homocysteine + pyruvate + NH4(+). Its pathway is cell wall biogenesis; peptidoglycan biosynthesis. Functionally, catalyzes the racemization of L-alanine to D-alanine, and of L-glutamate to D-glutamate. The activity is low, but likely physiological since W.pipientis wMel lacks canonical alr and murI genes, while D-alanine and D-glutamate are essential components of peptidoglycan. Also displays a vestigial cystathionine beta-lyase (CBL) activity, cleaving cystathionine to homocysteine and pyruvate; however, this reaction seems not to be physiologically relevant since the only met gene in the genome of this obligately intracellular parasitic bacterium is metC, demonstrating that it is a methionine auxotroph. This is L-alanine/L-glutamate racemase from Wolbachia pipientis wMel.